Here is a 152-residue protein sequence, read N- to C-terminus: Ribonuclease pancreatic gamma-type (152 aa).

A signal peptide spans 1–25 (MGLEKSFILFSLLVLVLGCVQPSLV). A disordered region spans residues 26 to 48 (GESKESPSEKFKRRHMDEEGPYQ). Residues 27–43 (ESKESPSEKFKRRHMDE) are compositionally biased toward basic and acidic residues. The substrate site is built by lysine 35 and arginine 38. Residue histidine 40 is the Proton acceptor of the active site. 4 disulfides stabilise this stretch: cysteine 54–cysteine 112, cysteine 68–cysteine 123, cysteine 86–cysteine 138, and cysteine 93–cysteine 100. Substrate contacts are provided by residues 69 to 73 (KPLNT) and lysine 94. Residue histidine 147 is the Proton donor of the active site.

This sequence belongs to the pancreatic ribonuclease family. In terms of assembly, monomer.

Its subcellular location is the secreted. It catalyses the reaction an [RNA] containing cytidine + H2O = an [RNA]-3'-cytidine-3'-phosphate + a 5'-hydroxy-ribonucleotide-3'-[RNA].. The catalysed reaction is an [RNA] containing uridine + H2O = an [RNA]-3'-uridine-3'-phosphate + a 5'-hydroxy-ribonucleotide-3'-[RNA].. Endonuclease that catalyzes the cleavage of RNA on the 3' side of pyrimidine nucleotides. Acts on single-stranded and double-stranded RNA. This chain is Ribonuclease pancreatic gamma-type, found in Rattus fuscipes (Bush rat).